A 179-amino-acid chain; its full sequence is ATP-dependent protease subunit HslV (179 aa).

Thr-6 is a catalytic residue. Residues Ser-162, Cys-165, and Thr-168 each contribute to the Na(+) site.

Belongs to the peptidase T1B family. HslV subfamily. In terms of assembly, a double ring-shaped homohexamer of HslV is capped on each side by a ring-shaped HslU homohexamer. The assembly of the HslU/HslV complex is dependent on binding of ATP.

Its subcellular location is the cytoplasm. The enzyme catalyses ATP-dependent cleavage of peptide bonds with broad specificity.. With respect to regulation, allosterically activated by HslU binding. Protease subunit of a proteasome-like degradation complex believed to be a general protein degrading machinery. The polypeptide is ATP-dependent protease subunit HslV (Maridesulfovibrio salexigens (strain ATCC 14822 / DSM 2638 / NCIMB 8403 / VKM B-1763) (Desulfovibrio salexigens)).